The chain runs to 42 residues: Crotamine Ile-19 (42 aa).

3 disulfides stabilise this stretch: Cys4–Cys36, Cys11–Cys30, and Cys18–Cys37.

It belongs to the crotamine-myotoxin family. Monomer. In terms of tissue distribution, expressed by the venom gland.

It is found in the secreted. Its function is as follows. Cationic peptide that possesses multiple functions. It acts as a cell-penetrating peptide (CPP), and as a potent voltage-gated potassium channel (Kv) inhibitor, it induces severe muscle necrosis by a non-enzymatic mechanism and exhibits antimicrobial activities. It also elicits a short-lasting hyperextension of the hind limb. It does not cause observable tissue damage (whereas the whole venom causes severe myonecrosis accompanied by edema and hemorrhage). The polypeptide is Crotamine Ile-19 (Crotalus durissus ruruima (South American rattlesnake)).